A 243-amino-acid polypeptide reads, in one-letter code: Vesicle-associated membrane protein-associated protein B (243 aa).

Position 2 is an N-acetylalanine (Ala-2). The Cytoplasmic portion of the chain corresponds to 2–218; it reads AKVEQVLSLE…AALAASGKEE (217 aa). The MSP domain occupies 7–124; it reads VLSLEPQHEL…MDSKLRCVFE (118 aa). Residue Ser-146 is modified to Phosphoserine. A Glycyl lysine isopeptide (Lys-Gly) (interchain with G-Cter in SUMO1) cross-link involves residue Lys-147. Residue Ser-159 is modified to Phosphoserine. A coiled-coil region spans residues 161 to 196; the sequence is LDDAEVKKVMEECRRLQGEVQRLREESRQLKEEDGL. Ser-206 is subject to Phosphoserine. Residues 219–239 form a helical; Anchor for type IV membrane protein membrane-spanning segment; sequence GLSARLLALVVLFFIVGVIIG.

It belongs to the VAMP-associated protein (VAP) (TC 9.B.17) family. Homodimer, and heterodimer with VAPA. Interacts with VAMP1 and VAMP2. Interacts (via MSP domain) with ZFYVE27. Interacts with RMDN3. Interacts with KIF5A in a ZFYVE27-dependent manner. Interacts (via MSP domain) with STARD3 (via phospho-FFAT motif). Interacts with STARD3NL (via FFAT motif). Interacts with CERT1. Interacts with PLEKHA3 and SACM1L to form a ternary complex. Interacts with VPS13A (via FFAT motif). Interacts with RB1CC1 (via phosphorylated FFAT motif), MIGA2 (via phosphorylated FFAT motif), RMDN3 (via phosphorylated FFAT motif), OSBPL1A (via FFAT motif), KCNB1 (via phosphorylated FFAT motif) and KCNB2 (via phosphorylated FFAT motif). Interacts (via MSP domain) with WDR44; the interactions connect the endoplasmic reticulum (ER) with the endosomal tubule. In terms of tissue distribution, ubiquitous.

It is found in the endoplasmic reticulum membrane. Its function is as follows. Endoplasmic reticulum (ER)-anchored protein that mediates the formation of contact sites between the ER and endosomes via interaction with FFAT motif-containing proteins such as STARD3 or WDR44. Interacts with STARD3 in a FFAT motif phosphorylation dependent manner. Via interaction with WDR44 participates in neosynthesized protein export. Participates in the endoplasmic reticulum unfolded protein response (UPR) by inducing ERN1/IRE1 activity. Involved in cellular calcium homeostasis regulation. The polypeptide is Vesicle-associated membrane protein-associated protein B (Rattus norvegicus (Rat)).